The chain runs to 1007 residues: Lysosomal alpha-mannosidase (1007 aa).

2 stretches are compositionally biased toward low complexity: residues 1 to 10 and 19 to 28; these read MGADARPLGV and AARPGTSSRA. The segment at 1–30 is disordered; it reads MGADARPLGVRAGGGGRGAARPGTSSRALP. The first 50 residues, 1–50, serve as a signal peptide directing secretion; the sequence is MGADARPLGVRAGGGGRGAARPGTSSRALPPPLPPLSFLLLLLAAPGARA. 2 disulfides stabilise this stretch: Cys56–Cys360 and Cys269–Cys274. Zn(2+) is bound by residues His73 and Asp75. N-linked (GlcNAc...) asparagine glycosylation is present at Asn134. A Zn(2+)-binding site is contributed by Asp197. Catalysis depends on Asp197, which acts as the Nucleophile. Residues Asn311, Asn347, and Asn369 are each glycosylated (N-linked (GlcNAc...) asparagine). 2 cysteine pairs are disulfide-bonded: Cys414/Cys474 and Cys495/Cys503. Zn(2+) is bound at residue His448. Residues Asn499, Asn543, Asn643, Asn649, Asn690, Asn764, and Asn927 are each glycosylated (N-linked (GlcNAc...) asparagine).

This sequence belongs to the glycosyl hydrolase 38 family. It depends on Zn(2+) as a cofactor. Processed into 3 peptides of 72 kDa, 41 kDa and 12 kDa.

The protein localises to the lysosome. The enzyme catalyses Hydrolysis of terminal, non-reducing alpha-D-mannose residues in alpha-D-mannosides.. In terms of biological role, necessary for the catabolism of N-linked carbohydrates released during glycoprotein turnover. In Felis catus (Cat), this protein is Lysosomal alpha-mannosidase (MAN2B1).